A 461-amino-acid chain; its full sequence is Elongation factor 1-alpha, oocyte form (461 aa).

Glycine 2 carries the post-translational modification N,N,N-trimethylglycine. The tr-type G domain occupies 5-242; that stretch reads KIHINIVVIG…DCIIPPQRPT (238 aa). The interval 14 to 21 is G1; sequence GHVDSGKS. A GTP-binding site is contributed by 14–21; the sequence is GHVDSGKS. Residues 70–74 form a G2 region; that stretch reads GITID. Positions 91–94 are G3; that stretch reads DAPG. GTP contacts are provided by residues 91–95 and 153–156; these read DAPGH and NKMD. The interval 153 to 156 is G4; sequence NKMD. Residues 194-196 are G5; that stretch reads SGW. Residues glutamate 301 and glutamate 374 each carry the 5-glutamyl glycerylphosphorylethanolamine modification.

This sequence belongs to the TRAFAC class translation factor GTPase superfamily. Classic translation factor GTPase family. EF-Tu/EF-1A subfamily. Oocyte.

It localises to the cytoplasm. Functionally, this protein promotes the GTP-dependent binding of aminoacyl-tRNA to the A-site of ribosomes during protein biosynthesis. The chain is Elongation factor 1-alpha, oocyte form (eef1ao) from Xenopus laevis (African clawed frog).